The chain runs to 130 residues: Putative F-box protein At1g77880 (130 aa).

The F-box domain maps to Lys-18 to Arg-64.

This chain is Putative F-box protein At1g77880, found in Arabidopsis thaliana (Mouse-ear cress).